A 901-amino-acid polypeptide reads, in one-letter code: Protein translocase subunit SecA (901 aa).

ATP-binding positions include Q87, 105–109, and D512; that span reads GEGKT. The tract at residues 859 to 901 is disordered; sequence HQDDDSAAAAALAAQTGERKVGRNDPCPCGSGKKYKQCHGRLQ. C885, C887, C896, and H897 together coordinate Zn(2+). A compositionally biased stretch (basic residues) spans 891-901; that stretch reads KKYKQCHGRLQ.

The protein belongs to the SecA family. As to quaternary structure, monomer and homodimer. Part of the essential Sec protein translocation apparatus which comprises SecA, SecYEG and auxiliary proteins SecDF-YajC and YidC. Requires Zn(2+) as cofactor.

It localises to the cell inner membrane. The protein resides in the cytoplasm. It catalyses the reaction ATP + H2O + cellular proteinSide 1 = ADP + phosphate + cellular proteinSide 2.. Functionally, part of the Sec protein translocase complex. Interacts with the SecYEG preprotein conducting channel. Has a central role in coupling the hydrolysis of ATP to the transfer of proteins into and across the cell membrane, serving both as a receptor for the preprotein-SecB complex and as an ATP-driven molecular motor driving the stepwise translocation of polypeptide chains across the membrane. The sequence is that of Protein translocase subunit SecA from Escherichia coli O157:H7.